The chain runs to 157 residues: Short-type peptidyl-prolyl cis-trans isomerase (157 aa).

The 95-residue stretch at 1-95 (MINLIKKGDY…RDERLIQEIP (95 aa)) folds into the PPIase FKBP-type domain. Residues 86–137 (RDERLIQEIPKEMFADADFEPQEGMLILASGIPAKIIKVTDDTVTLDFNHEL) are IF.

It belongs to the FKBP-type PPIase family.

The protein resides in the cytoplasm. It catalyses the reaction [protein]-peptidylproline (omega=180) = [protein]-peptidylproline (omega=0). Its function is as follows. Catalyzes the cis-trans isomerization of peptidyl prolyl bonds and accelerates protein folding. Also exhibits chaperone-like activity. In Methanocaldococcus jannaschii (strain ATCC 43067 / DSM 2661 / JAL-1 / JCM 10045 / NBRC 100440) (Methanococcus jannaschii), this protein is Short-type peptidyl-prolyl cis-trans isomerase.